We begin with the raw amino-acid sequence, 195 residues long: Cysteine/O-acetylserine efflux protein (195 aa).

At 1-7 (MTPTLLS) the chain is on the periplasmic side. The chain crosses the membrane as a helical span at residues 8-28 (AFWTYTLITAMTPGPNNILAL). Residues 29–46 (SSATTHGFHQSTRVLAGM) lie on the Cytoplasmic side of the membrane. Residues 47–67 (SLGFLIVMLLCAGISFSLAVI) form a helical membrane-spanning segment. Residues 68 to 69 (DP) are Periplasmic-facing. The helical transmembrane segment at 70-90 (AAVHLLSWAGAAYIVWLAWKI) threads the bilayer. Residues 91–104 (ATSPTKEDGLQTKP) are Cytoplasmic-facing. A helical membrane pass occupies residues 105–125 (ISFWASFALQFVNVKIILYGV). The Periplasmic portion of the chain corresponds to 126–141 (TALSTFVLPQTQALSW). A helical transmembrane segment spans residues 142 to 162 (IVGVSVLLAMIGTFGNVCWAL). The Cytoplasmic segment spans residues 163-176 (AGHLFQRLFRQYGR). The chain crosses the membrane as a helical span at residues 177-194 (QLNIVLALLLIYCAVRIF). Residue tyrosine 195 is a topological domain, periplasmic.

This sequence belongs to the Rht family.

Its subcellular location is the cell inner membrane. The enzyme catalyses O-acetyl-L-serine(in) = O-acetyl-L-serine(out). The catalysed reaction is L-cysteine(in) = L-cysteine(out). Its function is as follows. Exporter of O-acetylserine (OAS) and cysteine. In Escherichia coli O157:H7, this protein is Cysteine/O-acetylserine efflux protein (eamB).